The sequence spans 232 residues: 5'-methylthioadenosine/S-adenosylhomocysteine nucleosidase (232 aa).

Glu12 (proton acceptor) is an active-site residue. Residues Gly78, Ile152, and 173 to 174 (ME) each bind substrate. Residue Asp197 is the Proton donor of the active site.

It belongs to the PNP/UDP phosphorylase family. MtnN subfamily. As to quaternary structure, homodimer.

It catalyses the reaction S-adenosyl-L-homocysteine + H2O = S-(5-deoxy-D-ribos-5-yl)-L-homocysteine + adenine. It carries out the reaction S-methyl-5'-thioadenosine + H2O = 5-(methylsulfanyl)-D-ribose + adenine. The catalysed reaction is 5'-deoxyadenosine + H2O = 5-deoxy-D-ribose + adenine. The protein operates within amino-acid biosynthesis; L-methionine biosynthesis via salvage pathway; S-methyl-5-thio-alpha-D-ribose 1-phosphate from S-methyl-5'-thioadenosine (hydrolase route): step 1/2. In terms of biological role, catalyzes the irreversible cleavage of the glycosidic bond in both 5'-methylthioadenosine (MTA) and S-adenosylhomocysteine (SAH/AdoHcy) to adenine and the corresponding thioribose, 5'-methylthioribose and S-ribosylhomocysteine, respectively. Also cleaves 5'-deoxyadenosine, a toxic by-product of radical S-adenosylmethionine (SAM) enzymes, into 5-deoxyribose and adenine. Thus, is required for in vivo function of the radical SAM enzymes biotin synthase and lipoic acid synthase, that are inhibited by 5'-deoxyadenosine accumulation. The chain is 5'-methylthioadenosine/S-adenosylhomocysteine nucleosidase from Citrobacter koseri (strain ATCC BAA-895 / CDC 4225-83 / SGSC4696).